A 156-amino-acid chain; its full sequence is 6,7-dimethyl-8-ribityllumazine synthase (156 aa).

Residues phenylalanine 22, 57 to 59, and 81 to 83 each bind 5-amino-6-(D-ribitylamino)uracil; these read AVE and CVI. 86-87 contacts (2S)-2-hydroxy-3-oxobutyl phosphate; that stretch reads GT. The active-site Proton donor is the histidine 89. Phenylalanine 114 lines the 5-amino-6-(D-ribitylamino)uracil pocket. Arginine 128 is a (2S)-2-hydroxy-3-oxobutyl phosphate binding site.

The protein belongs to the DMRL synthase family. In terms of assembly, forms an icosahedral capsid composed of 60 subunits, arranged as a dodecamer of pentamers.

It carries out the reaction (2S)-2-hydroxy-3-oxobutyl phosphate + 5-amino-6-(D-ribitylamino)uracil = 6,7-dimethyl-8-(1-D-ribityl)lumazine + phosphate + 2 H2O + H(+). The protein operates within cofactor biosynthesis; riboflavin biosynthesis; riboflavin from 2-hydroxy-3-oxobutyl phosphate and 5-amino-6-(D-ribitylamino)uracil: step 1/2. Its function is as follows. Catalyzes the formation of 6,7-dimethyl-8-ribityllumazine by condensation of 5-amino-6-(D-ribitylamino)uracil with 3,4-dihydroxy-2-butanone 4-phosphate. This is the penultimate step in the biosynthesis of riboflavin. This is 6,7-dimethyl-8-ribityllumazine synthase from Vibrio cholerae serotype O1 (strain ATCC 39315 / El Tor Inaba N16961).